The primary structure comprises 84 residues: Phosphoribosylformylglycinamidine synthase subunit PurS (84 aa).

Belongs to the PurS family. As to quaternary structure, homodimer. Part of the FGAM synthase complex composed of 1 PurL, 1 PurQ and 2 PurS subunits.

The protein resides in the cytoplasm. The catalysed reaction is N(2)-formyl-N(1)-(5-phospho-beta-D-ribosyl)glycinamide + L-glutamine + ATP + H2O = 2-formamido-N(1)-(5-O-phospho-beta-D-ribosyl)acetamidine + L-glutamate + ADP + phosphate + H(+). It functions in the pathway purine metabolism; IMP biosynthesis via de novo pathway; 5-amino-1-(5-phospho-D-ribosyl)imidazole from N(2)-formyl-N(1)-(5-phospho-D-ribosyl)glycinamide: step 1/2. Functionally, part of the phosphoribosylformylglycinamidine synthase complex involved in the purines biosynthetic pathway. Catalyzes the ATP-dependent conversion of formylglycinamide ribonucleotide (FGAR) and glutamine to yield formylglycinamidine ribonucleotide (FGAM) and glutamate. The FGAM synthase complex is composed of three subunits. PurQ produces an ammonia molecule by converting glutamine to glutamate. PurL transfers the ammonia molecule to FGAR to form FGAM in an ATP-dependent manner. PurS interacts with PurQ and PurL and is thought to assist in the transfer of the ammonia molecule from PurQ to PurL. The polypeptide is Phosphoribosylformylglycinamidine synthase subunit PurS (Methanothermobacter thermautotrophicus (strain ATCC 29096 / DSM 1053 / JCM 10044 / NBRC 100330 / Delta H) (Methanobacterium thermoautotrophicum)).